Reading from the N-terminus, the 861-residue chain is E3 ubiquitin-protein ligase HECTD3 (861 aa).

Position 2 is an N-acetylalanine (Ala-2). Ser-12 is modified (phosphoserine). The DOC domain maps to 219-397 (DEDLIHFLYD…ASLVRYPRLE (179 aa)). An HECT domain is found at 512–857 (YEKPLDYRWP…NCVAIDTDMS (346 aa)). Cys-823 (glycyl thioester intermediate) is an active-site residue.

As to quaternary structure, interacts with TRIOBP. Interacts with STX8.

Its subcellular location is the cytoplasm. The protein localises to the perinuclear region. It carries out the reaction S-ubiquitinyl-[E2 ubiquitin-conjugating enzyme]-L-cysteine + [acceptor protein]-L-lysine = [E2 ubiquitin-conjugating enzyme]-L-cysteine + N(6)-ubiquitinyl-[acceptor protein]-L-lysine.. The protein operates within protein modification; protein ubiquitination. E3 ubiquitin ligases accepts ubiquitin from an E2 ubiquitin-conjugating enzyme in the form of a thioester and then directly transfers the ubiquitin to targeted substrates. Mediates ubiquitination of TRIOBP and its subsequent proteasomal degradation, thus facilitating cell cycle progression by regulating the turn-over of TRIOBP. Also mediates ubiquitination of STX8. The chain is E3 ubiquitin-protein ligase HECTD3 (Hectd3) from Mus musculus (Mouse).